Reading from the N-terminus, the 903-residue chain is uncharacterized protein (903 aa).

This is an uncharacterized protein from Gallid herpesvirus 2 (strain Chicken/Md5/ATCC VR-987) (GaHV-2).